Here is a 188-residue protein sequence, read N- to C-terminus: Inosine triphosphate pyrophosphatase (188 aa).

9–14 (TGNAKK) provides a ligand contact to ITP. Glu-39 is a binding site for Mg(2+). ITP is bound by residues Lys-51, 67-68 (DT), Lys-84, 143-146 (FGWD), Lys-166, and 171-172 (HR).

Belongs to the HAM1 NTPase family. As to quaternary structure, homodimer. Mg(2+) serves as cofactor. The cofactor is Mn(2+).

The protein resides in the cytoplasm. It carries out the reaction ITP + H2O = IMP + diphosphate + H(+). The enzyme catalyses dITP + H2O = dIMP + diphosphate + H(+). It catalyses the reaction XTP + H2O = XMP + diphosphate + H(+). Functionally, pyrophosphatase that hydrolyzes non-canonical purine nucleotides such as inosine triphosphate (ITP), deoxyinosine triphosphate (dITP) or xanthosine 5'-triphosphate (XTP) to their respective monophosphate derivatives. The enzyme does not distinguish between the deoxy- and ribose forms. Probably excludes non-canonical purines from RNA and DNA precursor pools, thus preventing their incorporation into RNA and DNA and avoiding chromosomal lesions. This chain is Inosine triphosphate pyrophosphatase, found in Anopheles gambiae (African malaria mosquito).